The following is a 124-amino-acid chain: Fluoride-specific ion channel FluC 2 (124 aa).

4 helical membrane passes run 8-28 (LPNQWNEMWLVAFGAVPGALV), 34-54 (NDLLVNVIGAAILGLVVGLPF), 60-80 (LLLGVGFCGSLTTFSSWMVEC), and 93-113 (LGLIGLTMGLGLGVAALGFLI). Na(+)-binding residues include Gly-68 and Thr-71.

Belongs to the fluoride channel Fluc/FEX (TC 1.A.43) family.

The protein resides in the cell inner membrane. It catalyses the reaction fluoride(in) = fluoride(out). Its activity is regulated as follows. Na(+) is not transported, but it plays an essential structural role and its presence is essential for fluoride channel function. Fluoride-specific ion channel. Important for reducing fluoride concentration in the cell, thus reducing its toxicity. This chain is Fluoride-specific ion channel FluC 2, found in Prochlorococcus marinus (strain MIT 9313).